Reading from the N-terminus, the 122-residue chain is Large ribosomal subunit protein uL14 (122 aa).

Belongs to the universal ribosomal protein uL14 family. As to quaternary structure, part of the 50S ribosomal subunit. Forms a cluster with proteins L3 and L19. In the 70S ribosome, L14 and L19 interact and together make contacts with the 16S rRNA in bridges B5 and B8.

Functionally, binds to 23S rRNA. Forms part of two intersubunit bridges in the 70S ribosome. This chain is Large ribosomal subunit protein uL14, found in Bordetella parapertussis (strain 12822 / ATCC BAA-587 / NCTC 13253).